The primary structure comprises 404 residues: S-adenosylmethionine synthase (404 aa).

Histidine 18 provides a ligand contact to ATP. Aspartate 20 serves as a coordination point for Mg(2+). Glutamate 46 is a K(+) binding site. L-methionine-binding residues include glutamate 59 and glutamine 102. Residues 102–112 (QSPEIAQGVDH) form a flexible loop region. ATP-binding positions include 178 to 180 (DGK), 249 to 250 (KF), aspartate 258, 264 to 265 (RK), alanine 281, and lysine 285. Aspartate 258 contributes to the L-methionine binding site. L-methionine is bound at residue lysine 289.

Belongs to the AdoMet synthase family. In terms of assembly, homotetramer; dimer of dimers. Mg(2+) serves as cofactor. The cofactor is K(+).

The protein localises to the cytoplasm. It catalyses the reaction L-methionine + ATP + H2O = S-adenosyl-L-methionine + phosphate + diphosphate. Its pathway is amino-acid biosynthesis; S-adenosyl-L-methionine biosynthesis; S-adenosyl-L-methionine from L-methionine: step 1/1. Functionally, catalyzes the formation of S-adenosylmethionine (AdoMet) from methionine and ATP. The overall synthetic reaction is composed of two sequential steps, AdoMet formation and the subsequent tripolyphosphate hydrolysis which occurs prior to release of AdoMet from the enzyme. The chain is S-adenosylmethionine synthase from Rhodococcus opacus (strain B4).